Reading from the N-terminus, the 143-residue chain is Snake venom vascular endothelial growth factor toxin (143 aa).

A signal peptide spans 1–24 (MAVYLLAVAILFCIQGWPSGTVQG). E25 is subject to Pyrrolidone carboxylic acid (Glu). 3 disulfide bridges follow: C38–C80, C69–C115, and C73–C117. The segment at 117-143 (CRPRSPGDVNDGRNPKEGEPRARFPFV) is disordered.

It belongs to the PDGF/VEGF growth factor family. Snake venom VEGF subfamily. In terms of assembly, homodimer; disulfide-linked. Interacts with VEGF receptor-1 (FLT1) with a high affinity, whereas it binds to VEGF receptor-2 (KDR) with a low affinity. Does not bind to VEGFR-3/FLT4 and neuropilin-1 (NRP1). As to expression, expressed by the venom gland.

The protein resides in the secreted. Functionally, snake venom VEGFs may contribute to venom dispersion and prey subjugation by inducing vascular permeability and hypotension. This protein activates the vascular endothelial growth factor receptor-1 (VEGFR-1/FLT1), and consequently promotes the proliferation and tissue factor production of endothelial cells, the neovascularization in the chicken chorioallantoic membrane, and increases vascular permeability. Also stimulates tissue-factor production and human monocyte chemotaxis. In Protobothrops mucrosquamatus (Taiwan habu), this protein is Snake venom vascular endothelial growth factor toxin.